The chain runs to 485 residues: Cobyric acid synthase (485 aa).

Residues 252–439 (KVRIAVPILP…VHGLFGDDRQ (188 aa)) form the GATase cobBQ-type domain. Catalysis depends on C334, which acts as the Nucleophile. The active site involves H431.

It belongs to the CobB/CobQ family. CobQ subfamily.

The protein operates within cofactor biosynthesis; adenosylcobalamin biosynthesis. Catalyzes amidations at positions B, D, E, and G on adenosylcobyrinic A,C-diamide. NH(2) groups are provided by glutamine, and one molecule of ATP is hydrogenolyzed for each amidation. The sequence is that of Cobyric acid synthase from Azorhizobium caulinodans (strain ATCC 43989 / DSM 5975 / JCM 20966 / LMG 6465 / NBRC 14845 / NCIMB 13405 / ORS 571).